The following is an 83-amino-acid chain: RNA-binding protein Hfq (83 aa).

A Sm domain is found at 10-69 (DPFLNALRREHVPVSIYLVNGIKLQGQIESFDQYVVLLRNTVTQMVYKHAISTIVPGRAV).

The protein belongs to the Hfq family. As to quaternary structure, homohexamer.

RNA chaperone that binds small regulatory RNA (sRNAs) and mRNAs to facilitate mRNA translational regulation in response to envelope stress, environmental stress and changes in metabolite concentrations. Also binds with high specificity to tRNAs. The polypeptide is RNA-binding protein Hfq (Paracidovorax citrulli (strain AAC00-1) (Acidovorax citrulli)).